Consider the following 850-residue polypeptide: Adenylate cyclase (850 aa).

A catalytic region spans residues 1–535; sequence MYLYIETLKQ…DISHHFPLRL (535 aa). Residues 541-850 are regulatory; it reads KALYSPCEIR…SLPTKQCQLH (310 aa).

The protein belongs to the adenylyl cyclase class-1 family.

The protein resides in the cytoplasm. It catalyses the reaction ATP = 3',5'-cyclic AMP + diphosphate. Its activity is regulated as follows. The regulatory domain is involved in the regulation of cyclase activity by the carbon source. In Yersinia pestis, this protein is Adenylate cyclase (cya).